The chain runs to 1141 residues: DNA-directed RNA polymerase subunit beta (1141 aa).

This sequence belongs to the RNA polymerase beta chain family. As to quaternary structure, the RNAP catalytic core consists of 2 alpha, 1 beta, 1 beta' and 1 omega subunit. When a sigma factor is associated with the core the holoenzyme is formed, which can initiate transcription.

It catalyses the reaction RNA(n) + a ribonucleoside 5'-triphosphate = RNA(n+1) + diphosphate. Its function is as follows. DNA-dependent RNA polymerase catalyzes the transcription of DNA into RNA using the four ribonucleoside triphosphates as substrates. The protein is DNA-directed RNA polymerase subunit beta of Frankia alni (strain DSM 45986 / CECT 9034 / ACN14a).